The chain runs to 485 residues: Glutamate--tRNA ligase (485 aa).

A 'HIGH' region motif is present at residues 11–21; sequence PSPTGLLHIGN. The 'KMSKS' region motif lies at 255–259; the sequence is KLSKR. Lys-258 contacts ATP.

It belongs to the class-I aminoacyl-tRNA synthetase family. Glutamate--tRNA ligase type 1 subfamily. In terms of assembly, monomer.

The protein localises to the cytoplasm. It carries out the reaction tRNA(Glu) + L-glutamate + ATP = L-glutamyl-tRNA(Glu) + AMP + diphosphate. Its function is as follows. Catalyzes the attachment of glutamate to tRNA(Glu) in a two-step reaction: glutamate is first activated by ATP to form Glu-AMP and then transferred to the acceptor end of tRNA(Glu). This is Glutamate--tRNA ligase from Streptococcus sanguinis (strain SK36).